The following is a 571-amino-acid chain: Phototropic-responsive NPH3 family protein NPY1 (571 aa).

In terms of domain architecture, BTB spans 29 to 97 (SDVTIHVGEV…CYGMTVTLNA (69 aa)). The NPH3 domain maps to 210–468 (DWWVEDVCEL…VQVLYFEQLR (259 aa)). Y409 bears the Phosphotyrosine mark. Residues 475–571 (ASVAASSHSP…SSRRRRHSIS (97 aa)) are disordered. The span at 484 to 504 (PVEKTEENKGEEATKKVELSK) shows a compositional bias: basic and acidic residues. Positions 540–562 (SNKSSEVSSGSSQSPPAKSSSSS) are enriched in low complexity.

This sequence belongs to the NPH3 family. Component of a complex made of PINs (e.g. PIN1 and PIN2), MAB4/MELs (e.g. NPY1/MAB4 and NPY5/MEL1) and AGC kinases (e.g. D6PK and PID) at the plasma membrane. Binds directly to PIN2 and PID. In terms of tissue distribution, accumulates in organ primordia such as cotyledons, leaves and floral organs. Expressed mainly in the apical regions of embryos including cotyledon tips and the apical meristem. Induced by the transcription factor ARF5/MP at the periphery of inflorescence meristems. Highly expressed in primary root tips and radicles.

It localises to the late endosome. The protein resides in the cell membrane. Its subcellular location is the cytoplasm. It is found in the cytosol. It participates in protein modification; protein ubiquitination. In terms of biological role, may act as a substrate-specific adapter of an E3 ubiquitin-protein ligase complex (CUL3-RBX1-BTB) which mediates the ubiquitination and subsequent proteasomal degradation of target proteins. Coregulates with PID the auxin-mediated plant organogenesis. Regulates basipetal PIN proteins (e.g. PIN1) polarization to establish inward auxin transport from the L1 surface of incipient organ primordia; this process is essential for the progression of flower organs development. Recruited to the plasma membrane by PINs (e.g. PIN1 and PIN2) and, in concert with AGC kinases-mediated (e.g. D6PK and PID) PINs phosphorylation, maintains their cell polarity (apical or basal) through limiting lateral diffusion-based escape. Induces auxin response in inner cell layers through a shift in PIN1 localization. Influences cotyledon development by regulating auxin distribution mainly in the protodermal cell layer. May play an essential role in root gravitropic responses. In Arabidopsis thaliana (Mouse-ear cress), this protein is Phototropic-responsive NPH3 family protein NPY1.